The chain runs to 420 residues: MKFTNLTAKEFGAFTDSMPYSHFTQTVGHYELKLAEGYETHLVGIKNNNNEVIAACLLTAVPVMKVFKYFYSNRGPVIDYENQELVHFFFNELSKYVKKHRCLYLHIDPYLPYQYLNHDGEITGNAGNDWFFDKMSNLGFEHTGFHKGFDPVLQIRYHSVLDLKDKTADDIIKNMDGLRKRNTKKVKKNGVKVRFLSEEELPIFRSFMEDTSESKAFADRDDKFYYNRLKYYKDRVLVPLAYINFDEYIKELNEERDILNKDLNKALKDIEKRPENKKAHNKRDNLQQQLDANEQKIEEGKRLQEEHGNELPISAGFFFINPFEVVYYAGGTSNAFRHFAGSYAVQWEMINYALNHGIDRYNFYGVSGKFTEDAEDAGVVKFKKGYNAEIIEYVGDFIKPINKPVYAAYTALKKVKDRIF.

This sequence belongs to the FemABX family. As to quaternary structure, homodimer. Interacts with FemB.

The protein localises to the cytoplasm. It catalyses the reaction beta-D-GlcNAc-(1-&gt;4)-Mur2Ac(oyl-L-Ala-D-isoglutaminyl-L-Lys-(N(6)-Gly)-D-Ala-D-Ala)-di-trans,octa-cis-undecaprenyl diphosphate + 2 glycyl-tRNA(Gly) = MurNAc-L-Ala-D-isoglutaminyl-L-Lys-(N(6)-tri-Gly)-D-Ala-D-Ala-diphospho-di-trans,octa-cis-undecaprenyl-GlcNAc + 2 tRNA(Gly) + 2 H(+). Functionally, catalyzes the formation of the pentaglycine interpeptide bridge, which is characteristic of the S.aureus peptidoglycan. Adds glycines 2 and 3 of the pentaglycine bridge, using glycyl-tRNA(Gly) as donor. Involved in resistance to methicillin. This Staphylococcus aureus (strain NCTC 8325 / PS 47) protein is Aminoacyltransferase FemA (femA).